Here is a 295-residue protein sequence, read N- to C-terminus: Pyridoxal 5'-phosphate synthase subunit PdxS (295 aa).

D25 is a binding site for D-ribose 5-phosphate. The Schiff-base intermediate with D-ribose 5-phosphate role is filled by K82. G154 contacts D-ribose 5-phosphate. R166 contacts D-glyceraldehyde 3-phosphate. D-ribose 5-phosphate contacts are provided by residues G215 and 236–237 (GS).

This sequence belongs to the PdxS/SNZ family. In the presence of PdxT, forms a dodecamer of heterodimers.

It catalyses the reaction aldehydo-D-ribose 5-phosphate + D-glyceraldehyde 3-phosphate + L-glutamine = pyridoxal 5'-phosphate + L-glutamate + phosphate + 3 H2O + H(+). The protein operates within cofactor biosynthesis; pyridoxal 5'-phosphate biosynthesis. Catalyzes the formation of pyridoxal 5'-phosphate from ribose 5-phosphate (RBP), glyceraldehyde 3-phosphate (G3P) and ammonia. The ammonia is provided by the PdxT subunit. Can also use ribulose 5-phosphate and dihydroxyacetone phosphate as substrates, resulting from enzyme-catalyzed isomerization of RBP and G3P, respectively. The protein is Pyridoxal 5'-phosphate synthase subunit PdxS of Haemophilus ducreyi (strain 35000HP / ATCC 700724).